The following is a 293-amino-acid chain: Ribosomal protein L11 methyltransferase (293 aa).

Residues Thr145, Gly166, Asp188, and Asn230 each contribute to the S-adenosyl-L-methionine site.

This sequence belongs to the methyltransferase superfamily. PrmA family.

It is found in the cytoplasm. The enzyme catalyses L-lysyl-[protein] + 3 S-adenosyl-L-methionine = N(6),N(6),N(6)-trimethyl-L-lysyl-[protein] + 3 S-adenosyl-L-homocysteine + 3 H(+). Functionally, methylates ribosomal protein L11. The protein is Ribosomal protein L11 methyltransferase of Shewanella baltica (strain OS223).